The chain runs to 316 residues: DNA-directed RNA polymerase III subunit RPC6 (316 aa).

At Ala-2 the chain carries N-acetylalanine. Glycyl lysine isopeptide (Lys-Gly) (interchain with G-Cter in SUMO2) cross-links involve residues Lys-5 and Lys-7. The [4Fe-4S] cluster site is built by Cys-287, Cys-290, Cys-296, and Cys-307.

Belongs to the eukaryotic RPC34/RPC39 RNA polymerase subunit family. In terms of assembly, component of the RNA polymerase III complex consisting of 17 subunits: a ten-subunit horseshoe-shaped catalytic core composed of POLR3A/RPC1, POLR3B/RPC2, POLR1C/RPAC1, POLR1D/RPAC2, POLR3K/RPC10, POLR2E/RPABC1, POLR2F/RPABC2, POLR2H/RPABC3, POLR2K/RPABC4 and POLR2L/RPABC5; a mobile stalk composed of two subunits POLR3H/RPC8 and CRCP/RPC9, protruding from the core and functioning primarily in transcription initiation; and additional subunits homologous to general transcription factors of the RNA polymerase II machinery, POLR3C/RPC3-POLR3F/RPC6-POLR3G/RPC7 heterotrimer required for transcription initiation and POLR3D/RPC4-POLR3E/RPC5 heterodimer involved in both transcription initiation and termination. Directly interacts with POLR3C. Interacts with TBP and TFIIIB90 and GTF3C4. Interacts with MAF1. As part of the RNA polymerase III complex, interacts with PKP2.

The protein localises to the nucleus. Functionally, DNA-dependent RNA polymerase catalyzes the transcription of DNA into RNA using the four ribonucleoside triphosphates as substrates. Specific peripheric component of RNA polymerase III (Pol III) which synthesizes small non-coding RNAs including 5S rRNA, snRNAs, tRNAs and miRNAs from at least 500 distinct genomic loci. Part of POLR3C/RPC3-POLR3F/RPC6-POLR3G/RPC7 heterotrimer that coordinates the dynamics of Pol III stalk and clamp modules during the transition from apo to elongation state. Pol III plays a key role in sensing and limiting infection by intracellular bacteria and DNA viruses, including varicella zoster virus. Acts as a nuclear and cytosolic DNA sensor detecting AT-rich DNA, involved in innate immune response. Can sense non-self dsDNA that serves as template for transcription into dsRNA. The non-self RNA polymerase III transcripts, such as Epstein-Barr virus-encoded RNAs (EBERs) induce type I interferon and NF-kappa-B through the RIG-I pathway. Preferentially binds double-stranded DNA (dsDNA). The protein is DNA-directed RNA polymerase III subunit RPC6 (POLR3F) of Bos taurus (Bovine).